Consider the following 99-residue polypeptide: Small ribosomal subunit protein uS14m (99 aa).

The protein belongs to the universal ribosomal protein uS14 family.

Its subcellular location is the mitochondrion. The sequence is that of Small ribosomal subunit protein uS14m (RPS14) from Acanthamoeba castellanii (Amoeba).